The sequence spans 622 residues: Chaperone protein HscA homolog (622 aa).

Belongs to the heat shock protein 70 family.

In terms of biological role, chaperone involved in the maturation of iron-sulfur cluster-containing proteins. Has a low intrinsic ATPase activity which is markedly stimulated by HscB. In Burkholderia pseudomallei (strain 1710b), this protein is Chaperone protein HscA homolog.